Here is a 386-residue protein sequence, read N- to C-terminus: Oxytocin receptor (386 aa).

A disordered region spans residues 1–31 (MEGVLAANWSAEAVNSSAAPPEAEGNRTAGP). The Extracellular segment spans residues 1–38 (MEGVLAANWSAEAVNSSAAPPEAEGNRTAGPPQRNEAL). Residues asparagine 8, asparagine 15, and asparagine 26 are each glycosylated (N-linked (GlcNAc...) asparagine). A helical transmembrane segment spans residues 39 to 63 (ARVEVAVLCLILFLALSGNACVLLA). The Cytoplasmic segment spans residues 64-74 (LRTTRHKHSRL). The helical transmembrane segment at 75-97 (FFFMKHLSIADLVVAVFQVLPQL) threads the bilayer. Residues 98 to 113 (LWDITFRFYGPDLLCR) are Extracellular-facing. The cysteines at positions 112 and 187 are disulfide-linked. A helical transmembrane segment spans residues 114-135 (LVKYLQVVGMFASTYLLLLMSL). At 136–154 (DRCLAICQPLRALRRPADR) the chain is on the cytoplasmic side. A helical transmembrane segment spans residues 155–175 (LAVLATWLGCLVASAPQVHIF). Residues 176 to 202 (SLREVADGVFDCWAVFIQPWGPKAYIT) are Extracellular-facing. Residues 203–225 (WITLAVYIVPVIVLAACYGLISF) traverse the membrane as a helical segment. The Cytoplasmic portion of the chain corresponds to 226 to 277 (KIWQNLRLKTAAEAAEAIAGTEGAAAGSRGRAALARVSSVKLISKAKIRTVK). The helical transmembrane segment at 278-296 (MTFIIVLAFIVCWTPFFFV) threads the bilayer. Residues 297 to 311 (QMWSVWDADAPKEAS) lie on the Extracellular side of the membrane. Residues 312–334 (AFIIAMLLASLNSCCNPWIYMLF) traverse the membrane as a helical segment. Residues 335–386 (TGHLFHELVQRFLCCSSSHLKTSRPGETSVSKKSNSSTFVLSQHSSSQKSCS) lie on the Cytoplasmic side of the membrane. Residues 355–375 (KTSRPGETSVSKKSNSSTFVL) show a composition bias toward polar residues. The segment at 355–386 (KTSRPGETSVSKKSNSSTFVLSQHSSSQKSCS) is disordered. Residues serine 368 and serine 370 each carry the phosphoserine modification. The span at 376–386 (SQHSSSQKSCS) shows a compositional bias: low complexity.

Belongs to the G-protein coupled receptor 1 family. Vasopressin/oxytocin receptor subfamily.

The protein localises to the cell membrane. Its function is as follows. Receptor for oxytocin. The activity of this receptor is mediated by G proteins which activate a phosphatidylinositol-calcium second messenger system. This Sus scrofa (Pig) protein is Oxytocin receptor (OXTR).